The sequence spans 955 residues: Mediator of RNA polymerase II transcription subunit 16 (955 aa).

The protein belongs to the Mediator complex subunit 16 family. Component of the Mediator complex.

It localises to the nucleus. Functionally, component of the Mediator complex, a coactivator involved in the regulated transcription of nearly all RNA polymerase II-dependent genes. Mediator functions as a bridge to convey information from gene-specific regulatory proteins to the basal RNA polymerase II transcription machinery. Mediator is recruited to promoters by direct interactions with regulatory proteins and serves as a scaffold for the assembly of a functional preinitiation complex with RNA polymerase II and the general transcription factors. This is Mediator of RNA polymerase II transcription subunit 16 (sin4) from Neosartorya fischeri (strain ATCC 1020 / DSM 3700 / CBS 544.65 / FGSC A1164 / JCM 1740 / NRRL 181 / WB 181) (Aspergillus fischerianus).